The sequence spans 146 residues: Hemoglobin subunit beta (146 aa).

Residues 2–146 form the Globin domain; that stretch reads QWSAEEKQLI…VAHALARKYH (145 aa). Heme b contacts are provided by His-63 and His-92.

The protein belongs to the globin family. As to quaternary structure, heterotetramer of two alpha chains and two beta chains. In terms of tissue distribution, red blood cells.

In terms of biological role, involved in oxygen transport from the lung to the various peripheral tissues. The protein is Hemoglobin subunit beta (HBB) of Struthio camelus (Common ostrich).